The sequence spans 105 residues: Large ribosomal subunit protein bL21 (105 aa).

The protein belongs to the bacterial ribosomal protein bL21 family. Part of the 50S ribosomal subunit. Contacts protein L20.

Functionally, this protein binds to 23S rRNA in the presence of protein L20. The protein is Large ribosomal subunit protein bL21 of Aliarcobacter butzleri (strain RM4018) (Arcobacter butzleri).